Reading from the N-terminus, the 231-residue chain is Large ribosomal subunit protein uL1 (231 aa).

The protein belongs to the universal ribosomal protein uL1 family. As to quaternary structure, part of the 50S ribosomal subunit.

Functionally, binds directly to 23S rRNA. The L1 stalk is quite mobile in the ribosome, and is involved in E site tRNA release. In terms of biological role, protein L1 is also a translational repressor protein, it controls the translation of the L11 operon by binding to its mRNA. This is Large ribosomal subunit protein uL1 from Desulforudis audaxviator (strain MP104C).